The chain runs to 335 residues: Phosphate acyltransferase (335 aa).

This sequence belongs to the PlsX family. As to quaternary structure, homodimer. Probably interacts with PlsY.

It is found in the cytoplasm. It catalyses the reaction a fatty acyl-[ACP] + phosphate = an acyl phosphate + holo-[ACP]. Its pathway is lipid metabolism; phospholipid metabolism. Its function is as follows. Catalyzes the reversible formation of acyl-phosphate (acyl-PO(4)) from acyl-[acyl-carrier-protein] (acyl-ACP). This enzyme utilizes acyl-ACP as fatty acyl donor, but not acyl-CoA. The polypeptide is Phosphate acyltransferase (Streptococcus pyogenes serotype M1).